The primary structure comprises 184 residues: Shikimate kinase (184 aa).

Residue 17-22 coordinates ATP; it reads GAGKTT. Mg(2+) is bound at residue Thr-21. Residues Asp-39, Arg-63, and Gly-85 each contribute to the substrate site. Arg-123 serves as a coordination point for ATP. Substrate is bound at residue Arg-142.

The protein belongs to the shikimate kinase family. As to quaternary structure, monomer. It depends on Mg(2+) as a cofactor.

It localises to the cytoplasm. The enzyme catalyses shikimate + ATP = 3-phosphoshikimate + ADP + H(+). Its pathway is metabolic intermediate biosynthesis; chorismate biosynthesis; chorismate from D-erythrose 4-phosphate and phosphoenolpyruvate: step 5/7. In terms of biological role, catalyzes the specific phosphorylation of the 3-hydroxyl group of shikimic acid using ATP as a cosubstrate. In Burkholderia pseudomallei (strain 1710b), this protein is Shikimate kinase.